The primary structure comprises 84 residues: uncharacterized protein (84 aa).

Residues 2–84 (ARVTLRITGT…RAKGDIEIEM (83 aa)) enclose the 2Fe-2S ferredoxin-type domain. C37, C42, C45, and C74 together coordinate [2Fe-2S] cluster.

The cofactor is [2Fe-2S] cluster.

This is an uncharacterized protein from Escherichia coli O6:H1 (strain CFT073 / ATCC 700928 / UPEC).